The chain runs to 81 residues: MALMYPFHVAQPPLNWSEHLWVSEVSPAKESFITTICEHRQAQWDNQDLLRHLQDSVAILTREDQRHVNAVHAAANMPANP.

The APC/C is probably composed of at least 12 subunits: apc-2, apc-10, apc-11, cdc-26, emb-1, emb-27, emb-30, mat-1, mat-2, mat-3, such-1 and gfi-3. Expressed in germ cells.

The protein operates within protein modification; protein ubiquitination. In terms of biological role, probable component of the anaphase promoting complex/cyclosome (APC/C), a cell cycle-regulated E3 ubiquitin ligase that controls progression through mitosis and the G1 phase of the cell cycle. The APC/C complex acts by mediating ubiquitination and subsequent degradation of target proteins. Developmental role in early embryogenesis and the metaphase to anaphase transition in meiosis and mitosis. May be required for germline proliferation. Required for male tail development and hermaphrodite vulva formation. In Caenorhabditis elegans, this protein is Anaphase-promoting complex subunit emb-1.